Consider the following 361-residue polypeptide: tRNA-specific 2-thiouridylase MnmA (361 aa).

ATP contacts are provided by residues 11-18 and M37; that span reads GMSGGVDS. The segment at 97 to 99 is interaction with target base in tRNA; sequence NPD. Catalysis depends on C102, which acts as the Nucleophile. A disulfide bridge links C102 with C199. G126 serves as a coordination point for ATP. The interval 149–151 is interaction with tRNA; sequence KDQ. Catalysis depends on C199, which acts as the Cysteine persulfide intermediate. The segment at 311 to 312 is interaction with tRNA; sequence RY.

The protein belongs to the MnmA/TRMU family.

It is found in the cytoplasm. It catalyses the reaction S-sulfanyl-L-cysteinyl-[protein] + uridine(34) in tRNA + AH2 + ATP = 2-thiouridine(34) in tRNA + L-cysteinyl-[protein] + A + AMP + diphosphate + H(+). Catalyzes the 2-thiolation of uridine at the wobble position (U34) of tRNA, leading to the formation of s(2)U34. The polypeptide is tRNA-specific 2-thiouridylase MnmA (Cupriavidus necator (strain ATCC 17699 / DSM 428 / KCTC 22496 / NCIMB 10442 / H16 / Stanier 337) (Ralstonia eutropha)).